Consider the following 128-residue polypeptide: Nitrogen fixation nifHD region GlnB-like protein 2 (128 aa).

This sequence belongs to the P(II) protein family.

In terms of biological role, could be involved in the regulation of nitrogen fixation. This is Nitrogen fixation nifHD region GlnB-like protein 2 (glnBB) from Methanothermococcus thermolithotrophicus (Methanococcus thermolithotrophicus).